The sequence spans 250 residues: Corrinoid adenosyltransferase MMAB (250 aa).

Residues 1–32 constitute a mitochondrion transit peptide; sequence MAVCGLGSRLGLGSRLGLRGCFGAARLLYPRF. Positions 34 to 59 are disordered; it reads SRGPQGVEDGDRPQPSSKTPRIPKIY. ATP contacts are provided by residues 60 to 63, 68 to 69, and K78; these read TKTG and SS. S134 is modified (phosphoserine). 190-194 is an ATP binding site; sequence RRAER. An N6-succinyllysine modification is found at K211. N214 is an ATP binding site. Residue K230 is modified to N6-acetyllysine; alternate. Residue K230 is modified to N6-succinyllysine; alternate.

It belongs to the Cob(I)alamin adenosyltransferase family. As to quaternary structure, homotrimer. In terms of tissue distribution, expressed in liver and skeletal muscle.

The protein localises to the mitochondrion. It catalyses the reaction cob(I)alamin-[corrinoid adenosyltransferase] + ATP = apo-[corrinoid adenosyltransferase] + adenosylcob(III)alamin + triphosphate. In terms of biological role, converts cob(I)alamin to adenosylcobalamin (adenosylcob(III)alamin), a coenzyme for methylmalonyl-CoA mutase, therefore participates in the final step of the vitamin B12 conversion. Generates adenosylcobalamin (AdoCbl) and directly delivers the cofactor to MUT in a transfer that is stimulated by ATP-binding to MMAB and gated by MMAA. This Homo sapiens (Human) protein is Corrinoid adenosyltransferase MMAB.